The chain runs to 142 residues: Hemoglobin subunit alpha (142 aa).

The 141-residue stretch at 2 to 142 folds into the Globin domain; it reads VLSADDKANI…VSTVLTSKYR (141 aa). Ser4 is modified (phosphoserine). N6-succinyllysine occurs at positions 8 and 12. N6-acetyllysine; alternate is present on Lys17. N6-succinyllysine; alternate is present on Lys17. Position 25 is a phosphotyrosine (Tyr25). At Ser36 the chain carries Phosphoserine. At Lys41 the chain carries N6-succinyllysine. Ser50 bears the Phosphoserine mark. His59 lines the O2 pocket. His88 contributes to the heme b binding site. A Phosphothreonine modification is found at Thr109. Residues Ser125 and Ser132 each carry the phosphoserine modification. Thr135 and Thr138 each carry phosphothreonine. Residue Ser139 is modified to Phosphoserine.

The protein belongs to the globin family. Heterotetramer of two alpha chains and two beta chains. Red blood cells.

Its function is as follows. Involved in oxygen transport from the lung to the various peripheral tissues. Functionally, hemopressin acts as an antagonist peptide of the cannabinoid receptor CNR1. Hemopressin-binding efficiently blocks cannabinoid receptor CNR1 and subsequent signaling. This Cricetomys gambianus (Northern giant pouched rat) protein is Hemoglobin subunit alpha (HBA).